The following is a 101-amino-acid chain: Large ribosomal subunit protein uL23 (101 aa).

This sequence belongs to the universal ribosomal protein uL23 family. Part of the 50S ribosomal subunit. Contacts protein L29, and trigger factor when it is bound to the ribosome.

Its function is as follows. One of the early assembly proteins it binds 23S rRNA. One of the proteins that surrounds the polypeptide exit tunnel on the outside of the ribosome. Forms the main docking site for trigger factor binding to the ribosome. The chain is Large ribosomal subunit protein uL23 from Nocardia farcinica (strain IFM 10152).